Reading from the N-terminus, the 940-residue chain is Protein translocase subunit SecA 1 (940 aa).

Residues Q83, 101–105 (GEGKT), and D490 contribute to the ATP site. A disordered region spans residues 856 to 940 (AEQGGTATAA…AKPPKSVKRR (85 aa)).

It belongs to the SecA family. As to quaternary structure, monomer and homodimer. Part of the essential Sec protein translocation apparatus which comprises SecA, SecYEG and auxiliary proteins SecDF. Other proteins may also be involved.

Its subcellular location is the cell membrane. It is found in the cytoplasm. The enzyme catalyses ATP + H2O + cellular proteinSide 1 = ADP + phosphate + cellular proteinSide 2.. Part of the Sec protein translocase complex. Interacts with the SecYEG preprotein conducting channel. Has a central role in coupling the hydrolysis of ATP to the transfer of proteins into and across the cell membrane, serving as an ATP-driven molecular motor driving the stepwise translocation of polypeptide chains across the membrane. This is Protein translocase subunit SecA 1 from Mycolicibacterium paratuberculosis (strain ATCC BAA-968 / K-10) (Mycobacterium paratuberculosis).